A 60-amino-acid chain; its full sequence is Large ribosomal subunit protein uL30 (60 aa).

This sequence belongs to the universal ribosomal protein uL30 family. As to quaternary structure, part of the 50S ribosomal subunit.

The chain is Large ribosomal subunit protein uL30 from Streptococcus gordonii (strain Challis / ATCC 35105 / BCRC 15272 / CH1 / DL1 / V288).